The chain runs to 62 residues: Protein DsrB (62 aa).

This sequence belongs to the DsrB family.

This is Protein DsrB from Escherichia fergusonii (strain ATCC 35469 / DSM 13698 / CCUG 18766 / IAM 14443 / JCM 21226 / LMG 7866 / NBRC 102419 / NCTC 12128 / CDC 0568-73).